A 281-amino-acid chain; its full sequence is Insulin-like growth factor-binding protein 7 (281 aa).

A signal peptide spans 1–25; it reads MERPPRALLLGAAGLLLLLLPLSSS. Residues 27-113 enclose the IGFBP N-terminal domain; sequence SSDACGPCVP…PATLAVCVCK (87 aa). Intrachain disulfides connect C31–C56, C34–C58, C39–C59, C47–C62, C70–C86, C80–C110, C112–C130, and C119–C155. Residues 98 to 157 enclose the Kazal-like domain; it reads GAAAGGPATLAVCVCKSRYPVCGSNGITYPSGCQLRAASLRAESRGEKAITQVSKGTCEQ. The 105-residue stretch at 159–263 folds into the Ig-like C2-type domain; it reads PSIVTPPKDI…GQASAAAKIT (105 aa). N-linked (GlcNAc...) asparagine glycosylation is present at N170. A disulfide bridge links C180 with C247. A Phosphoserine modification is found at S238.

May interact with VPS24/CHMP3; the relevance of such interaction however remains unclear. Interacts with CD93; this interaction plays a role in endothelial cells angiogenesis. Post-translationally, N-glycosylated. Expressed at high levels in lung, kidney, small intestine, testis and uterus and at moderate levels in liver.

It localises to the secreted. Binds IGF1 and IGF2 with a relatively low affinity. Stimulates prostacyclin (PGI2) production. Stimulates cell adhesion. Acts as a ligand for CD93 to play a role in angiogenesis. The chain is Insulin-like growth factor-binding protein 7 (Igfbp7) from Mus musculus (Mouse).